Reading from the N-terminus, the 230-residue chain is Urease accessory protein UreE (230 aa).

Residues 197–230 form a disordered region; the sequence is LHIHAIHSHGDGDSHNHDHDHSHSHGDHDHDHKH. Over residues 204-230 the composition is skewed to basic and acidic residues; it reads SHGDGDSHNHDHDHSHSHGDHDHDHKH.

Belongs to the UreE family.

The protein localises to the cytoplasm. In terms of biological role, involved in urease metallocenter assembly. Binds nickel. Probably functions as a nickel donor during metallocenter assembly. This chain is Urease accessory protein UreE, found in Yersinia aldovae.